Consider the following 609-residue polypeptide: Glutamine--fructose-6-phosphate aminotransferase [isomerizing] (609 aa).

Catalysis depends on Cys-2, which acts as the Nucleophile; for GATase activity. The region spanning 2-219 (CGIVGYIGGR…DGECARLTRD (218 aa)) is the Glutamine amidotransferase type-2 domain. SIS domains follow at residues 285–424 (SSDL…LRGT) and 458–599 (LARE…VDQP). Lys-604 (for Fru-6P isomerization activity) is an active-site residue.

Homodimer.

Its subcellular location is the cytoplasm. It carries out the reaction D-fructose 6-phosphate + L-glutamine = D-glucosamine 6-phosphate + L-glutamate. Functionally, catalyzes the first step in hexosamine metabolism, converting fructose-6P into glucosamine-6P using glutamine as a nitrogen source. This Gloeobacter violaceus (strain ATCC 29082 / PCC 7421) protein is Glutamine--fructose-6-phosphate aminotransferase [isomerizing].